Here is a 354-residue protein sequence, read N- to C-terminus: Guanine nucleotide-binding protein G(t) subunit alpha-2 (354 aa).

The disordered stretch occupies residues 1-27 (MGSGASAEDKELAKRSKELEKKLQEDA). A lipid anchor (N-myristoyl glycine) is attached at Gly2. The span at 7-27 (AEDKELAKRSKELEKKLQEDA) shows a compositional bias: basic and acidic residues. The G-alpha domain maps to 32 to 354 (KTVKLLLLGA…KENLKDCGLF (323 aa)). The interval 35 to 48 (KLLLLGAGESGKST) is G1 motif. GTP-binding positions include 40 to 47 (GAGESGKS), 175 to 181 (LRSRVKT), 200 to 204 (DVGGQ), 269 to 272 (NKKD), and Ala326. Mg(2+)-binding residues include Ser47 and Thr181. The interval 173–181 (DVLRSRVKT) is G2 motif. The tract at residues 196-205 (FRMFDVGGQR) is G3 motif. The interval 265-272 (VLFLNKKD) is G4 motif. The G5 motif stretch occupies residues 324–329 (TCATDT).

Belongs to the G-alpha family. G(i/o/t/z) subfamily. In terms of assembly, g proteins are composed of 3 units; alpha, beta and gamma. The alpha chain contains the guanine nucleotide binding site. As to expression, retinal rod outer segment.

It localises to the cell projection. It is found in the cilium. The protein resides in the photoreceptor outer segment. The protein localises to the photoreceptor inner segment. Functionally, guanine nucleotide-binding proteins (G proteins) are involved as modulators or transducers in various transmembrane signaling systems. Transducin is an amplifier and one of the transducers of a visual impulse that performs the coupling between rhodopsin and cGMP-phosphodiesterase. This Bos taurus (Bovine) protein is Guanine nucleotide-binding protein G(t) subunit alpha-2 (GNAT2).